We begin with the raw amino-acid sequence, 631 residues long: Dolichyl-diphosphooligosaccharide--protein glycosyltransferase subunit 2 (631 aa).

The N-terminal stretch at 1-22 (MAPPGSSTVFLLALTIIASTWA) is a signal peptide. Residues 23-540 (LTPTHYLTKH…REPEKRPPTV (518 aa)) are Lumenal-facing. Asn106 is a glycosylation site (N-linked (GlcNAc...) asparagine). Lys154 participates in a covalent cross-link: Glycyl lysine isopeptide (Lys-Gly) (interchain with G-Cter in ubiquitin). A helical membrane pass occupies residues 541 to 561 (VSNTFTALILSPLLLLFALWI). At 562–571 (RIGANVSNFT) the chain is on the cytoplasmic side. Residues 572–592 (FAPSTIIFHLGHAAMLGLMYV) traverse the membrane as a helical segment. The Lumenal segment spans residues 593 to 596 (YWTQ). A helical membrane pass occupies residues 597–617 (LNMFQTLKYLAILGSVTFLAG). The Cytoplasmic portion of the chain corresponds to 618-631 (NRMLAQQAVKRTAH).

The protein belongs to the SWP1 family. As to quaternary structure, component of the oligosaccharyltransferase (OST) complex. OST exists in two different complex forms which contain common core subunits RPN1, RPN2, OST48, OST4, DAD1 and TMEM258, either STT3A or STT3B as catalytic subunits, and form-specific accessory subunits. STT3A complex assembly occurs through the formation of 3 subcomplexes. Subcomplex 1 contains RPN1 and TMEM258, subcomplex 2 contains the STT3A-specific subunits STT3A, DC2/OSTC, and KCP2 as well as the core subunit OST4, and subcomplex 3 contains RPN2, DAD1, and OST48. The STT3A complex can form stable complexes with the Sec61 complex or with both the Sec61 and TRAP complexes. Interacts with DDI2. Interacts with TMEM35A/NACHO. Expressed in all tissues tested.

The protein localises to the endoplasmic reticulum. It localises to the endoplasmic reticulum membrane. It participates in protein modification; protein glycosylation. Functionally, subunit of the oligosaccharyl transferase (OST) complex that catalyzes the initial transfer of a defined glycan (Glc(3)Man(9)GlcNAc(2) in eukaryotes) from the lipid carrier dolichol-pyrophosphate to an asparagine residue within an Asn-X-Ser/Thr consensus motif in nascent polypeptide chains, the first step in protein N-glycosylation. N-glycosylation occurs cotranslationally and the complex associates with the Sec61 complex at the channel-forming translocon complex that mediates protein translocation across the endoplasmic reticulum (ER). All subunits are required for a maximal enzyme activity. This chain is Dolichyl-diphosphooligosaccharide--protein glycosyltransferase subunit 2, found in Homo sapiens (Human).